Here is a 520-residue protein sequence, read N- to C-terminus: GMP synthase [glutamine-hydrolyzing] (520 aa).

Residues T9 to D202 form the Glutamine amidotransferase type-1 domain. Residue C86 is the Nucleophile of the active site. Catalysis depends on residues H176 and E178. A GMPS ATP-PPase domain is found at W203–R395. Residue S230–S236 coordinates ATP.

As to quaternary structure, homodimer.

The catalysed reaction is XMP + L-glutamine + ATP + H2O = GMP + L-glutamate + AMP + diphosphate + 2 H(+). Its pathway is purine metabolism; GMP biosynthesis; GMP from XMP (L-Gln route): step 1/1. Functionally, catalyzes the synthesis of GMP from XMP. The polypeptide is GMP synthase [glutamine-hydrolyzing] (Mesorhizobium japonicum (strain LMG 29417 / CECT 9101 / MAFF 303099) (Mesorhizobium loti (strain MAFF 303099))).